Reading from the N-terminus, the 68-residue chain is Protein P33 (68 aa).

The stretch at 34-63 (IVNLQGRIAELEARETEMLARVDTLIARLA) forms a coiled coil.

Assembly protein. The polypeptide is Protein P33 (XXXIII) (Acinetobacter calcoaceticus (Arthrobacter siderocapsulatus)).